We begin with the raw amino-acid sequence, 393 residues long: Acetylornithine aminotransferase (393 aa).

Residues 96–97 and Phe129 contribute to the pyridoxal 5'-phosphate site; that span reads GT. Arg132 contributes to the N(2)-acetyl-L-ornithine binding site. Pyridoxal 5'-phosphate is bound at residue 214-217; sequence DEVQ. The residue at position 243 (Lys243) is an N6-(pyridoxal phosphate)lysine. Ser271 contributes to the N(2)-acetyl-L-ornithine binding site. A pyridoxal 5'-phosphate-binding site is contributed by Thr272.

It belongs to the class-III pyridoxal-phosphate-dependent aminotransferase family. ArgD subfamily. As to quaternary structure, homodimer. Pyridoxal 5'-phosphate is required as a cofactor.

The protein resides in the cytoplasm. It catalyses the reaction N(2)-acetyl-L-ornithine + 2-oxoglutarate = N-acetyl-L-glutamate 5-semialdehyde + L-glutamate. It participates in amino-acid biosynthesis; L-arginine biosynthesis; N(2)-acetyl-L-ornithine from L-glutamate: step 4/4. This Rhodobacter capsulatus (strain ATCC BAA-309 / NBRC 16581 / SB1003) protein is Acetylornithine aminotransferase.